A 188-amino-acid polypeptide reads, in one-letter code: Adenine phosphoribosyltransferase (188 aa).

The protein belongs to the purine/pyrimidine phosphoribosyltransferase family. In terms of assembly, homodimer.

The protein localises to the cytoplasm. It catalyses the reaction AMP + diphosphate = 5-phospho-alpha-D-ribose 1-diphosphate + adenine. Its pathway is purine metabolism; AMP biosynthesis via salvage pathway; AMP from adenine: step 1/1. Its function is as follows. Catalyzes a salvage reaction resulting in the formation of AMP, that is energically less costly than de novo synthesis. The sequence is that of Adenine phosphoribosyltransferase from Burkholderia lata (strain ATCC 17760 / DSM 23089 / LMG 22485 / NCIMB 9086 / R18194 / 383).